A 172-amino-acid chain; its full sequence is Antibacterial protein PR-39 (172 aa).

Positions Met-1–Ala-29 are cleaved as a signal peptide. Gln-30 carries the post-translational modification Pyrrolidone carboxylic acid. The propeptide occupies Gln-30 to Val-130. The interval Asp-61–Val-80 is disordered. Cystine bridges form between Cys-85/Cys-96 and Cys-107/Cys-124. The interval Val-130–Arg-172 is disordered. Residues Pro-136–Arg-172 are compositionally biased toward pro residues. Pro-169 is modified (proline amide).

It belongs to the cathelicidin family. In terms of tissue distribution, small intestine and bone marrow.

The protein resides in the secreted. Exerts a potent antimicrobial activity against both E.coli and B.megaterium. The chain is Antibacterial protein PR-39 (PR39) from Sus scrofa (Pig).